Here is a 251-residue protein sequence, read N- to C-terminus: Ribonuclease PH (251 aa).

Phosphate contacts are provided by residues R87 and 125-127 (GTR).

Belongs to the RNase PH family. Homohexameric ring arranged as a trimer of dimers.

The catalysed reaction is tRNA(n+1) + phosphate = tRNA(n) + a ribonucleoside 5'-diphosphate. Functionally, phosphorolytic 3'-5' exoribonuclease that plays an important role in tRNA 3'-end maturation. Removes nucleotide residues following the 3'-CCA terminus of tRNAs; can also add nucleotides to the ends of RNA molecules by using nucleoside diphosphates as substrates, but this may not be physiologically important. Probably plays a role in initiation of 16S rRNA degradation (leading to ribosome degradation) during starvation. In Saccharopolyspora erythraea (strain ATCC 11635 / DSM 40517 / JCM 4748 / NBRC 13426 / NCIMB 8594 / NRRL 2338), this protein is Ribonuclease PH.